Reading from the N-terminus, the 74-residue chain is Conotoxin ArMKLT2-041 (74 aa).

Residues 1 to 22 form the signal peptide; it reads MKLTCVLIVAVLFLTACQLIAA. Residues 23–46 constitute a propeptide that is removed on maturation; that stretch reads DDSRDLQKFPRRKMRDGMLNTKNT. Glutamine 49 is subject to Pyrrolidone carboxylic acid. Disulfide bonds link cysteine 50-cysteine 65, cysteine 57-cysteine 68, and cysteine 64-cysteine 73.

It belongs to the conotoxin O1 superfamily. Expressed by the venom duct.

The protein resides in the secreted. In Conus arenatus (Sand-dusted cone), this protein is Conotoxin ArMKLT2-041.